A 391-amino-acid polypeptide reads, in one-letter code: Cilia- and flagella-associated protein 263 (391 aa).

The segment at 1-21 (MTDDDSETSASETQAQEESDL) is disordered. Coiled coils occupy residues 95 to 243 (LSVD…NQEL) and 294 to 369 (LRKE…LKGY).

The protein belongs to the CFAP263 family. As to quaternary structure, forms a complex with CFAP184; the interaction is required for functional activity in cilia. Interacts with HAP1 and PCM1.

The protein localises to the cytoplasm. The protein resides in the cytoskeleton. It is found in the microtubule organizing center. Its subcellular location is the centrosome. It localises to the centriolar satellite. The protein localises to the cell projection. The protein resides in the cilium. Component of centriolar satellites contributing to primary cilium formation. In complex with CFAP263, acts as a regulator of ciliary beating that connects radial spoke 3 (RS3) to the inner dynein arm (IDA) and the nexin-dynein regulatory complex (N-DRC). The complex is positioned parallel to N-DRC and forms a connection between the arch at the base of RS3, the IDA tail and N-DRC. This Bos taurus (Bovine) protein is Cilia- and flagella-associated protein 263 (CFAP263).